The chain runs to 24 residues: Brevinin-1Lb (24 aa).

Cys18 and Cys24 are joined by a disulfide.

As to expression, expressed by the skin glands.

The protein localises to the secreted. In terms of biological role, antibacterial activity against Gram-positive bacterium S.aureus and Gram-negative bacterium E.coli. This is Brevinin-1Lb from Rana luteiventris (Columbia spotted frog).